Here is a 172-residue protein sequence, read N- to C-terminus: MTLDLHDYVASIQDFPEKGVTFRDISPLMENGEAYRQATNAIIKFARDKGVEMIVGPEARGFIVGCPVAYEMGIGFAPARKKGKLPRETVKATYGLEYGKSELYLQKDAIKPGQKVLITDDLLATGGTIAATIELVEKLGGIVVGTAFFIELKDLNGREKIKDYDTLSLMEY.

The protein belongs to the purine/pyrimidine phosphoribosyltransferase family. As to quaternary structure, homodimer.

The protein resides in the cytoplasm. It catalyses the reaction AMP + diphosphate = 5-phospho-alpha-D-ribose 1-diphosphate + adenine. It functions in the pathway purine metabolism; AMP biosynthesis via salvage pathway; AMP from adenine: step 1/1. Catalyzes a salvage reaction resulting in the formation of AMP, that is energically less costly than de novo synthesis. The chain is Adenine phosphoribosyltransferase from Pediococcus pentosaceus (strain ATCC 25745 / CCUG 21536 / LMG 10740 / 183-1w).